The sequence spans 457 residues: Gamma-aminobutyric acid receptor subunit gamma-4 (457 aa).

An N-terminal signal peptide occupies residues 1 to 21 (MPAMVLLLCLALGPALRSARC). The Extracellular segment spans residues 22–256 (ESTEEYDYDY…VSFDLSRRMG (235 aa)). 2 N-linked (GlcNAc...) asparagine glycosylation sites follow: Asn-35 and Asn-112. Residues Cys-173 and Cys-187 are joined by a disulfide bond. Asn-230 carries N-linked (GlcNAc...) asparagine glycosylation. The next 3 helical transmembrane spans lie at 257–279 (YFAI…SFWI), 283–305 (STPA…STIS), and 317–339 (AMDL…YATL). The Cytoplasmic portion of the chain corresponds to 340–433 (NYLVGNKKPL…VRIHISRLDS (94 aa)). A helical transmembrane segment spans residues 434 to 457 (YSRVFFPTAFLLFNIVYWIAYLYL).

It belongs to the ligand-gated ion channel (TC 1.A.9) family. Gamma-aminobutyric acid receptor (TC 1.A.9.5) subfamily. GABRG4 sub-subfamily. As to quaternary structure, generally pentameric. There are five types of GABA(A) receptor chains: alpha, beta, gamma, delta, and rho. As to expression, abundant in several brain regions, including the ectostriatum, nucleus rotundus and hyperstriatum ventrale.

The protein localises to the postsynaptic cell membrane. The protein resides in the cell membrane. Its function is as follows. GABA, the major inhibitory neurotransmitter in the vertebrate brain, mediates neuronal inhibition by binding to the GABA/benzodiazepine receptor and opening an integral chloride channel. The sequence is that of Gamma-aminobutyric acid receptor subunit gamma-4 (GABRG4) from Gallus gallus (Chicken).